We begin with the raw amino-acid sequence, 351 residues long: Nicotinate-nucleotide--dimethylbenzimidazole phosphoribosyltransferase (351 aa).

The active-site Proton acceptor is the E317.

Belongs to the CobT family.

The enzyme catalyses 5,6-dimethylbenzimidazole + nicotinate beta-D-ribonucleotide = alpha-ribazole 5'-phosphate + nicotinate + H(+). The protein operates within nucleoside biosynthesis; alpha-ribazole biosynthesis; alpha-ribazole from 5,6-dimethylbenzimidazole: step 1/2. Catalyzes the synthesis of alpha-ribazole-5'-phosphate from nicotinate mononucleotide (NAMN) and 5,6-dimethylbenzimidazole (DMB). This chain is Nicotinate-nucleotide--dimethylbenzimidazole phosphoribosyltransferase, found in Pseudomonas aeruginosa (strain LESB58).